The following is a 241-amino-acid chain: Orotidine 5'-phosphate decarboxylase (241 aa).

Substrate-binding positions include Asp18, Lys39, 66–75 (DLKFHDIPAT), Thr130, Arg192, Gln201, Gly221, and Arg222. Lys68 acts as the Proton donor in catalysis.

It belongs to the OMP decarboxylase family. Type 1 subfamily. As to quaternary structure, homodimer.

It carries out the reaction orotidine 5'-phosphate + H(+) = UMP + CO2. It participates in pyrimidine metabolism; UMP biosynthesis via de novo pathway; UMP from orotate: step 2/2. Functionally, catalyzes the decarboxylation of orotidine 5'-monophosphate (OMP) to uridine 5'-monophosphate (UMP). In Synechococcus sp. (strain CC9605), this protein is Orotidine 5'-phosphate decarboxylase.